A 591-amino-acid polypeptide reads, in one-letter code: Ketol-acid reductoisomerase, chloroplastic (591 aa).

The tract at residues 1 to 20 is disordered; the sequence is MAAATSSIAPSLSCPSPSSS. A chloroplast-targeting transit peptide spans 1–52; sequence MAAATSSIAPSLSCPSPSSSSKTLWSSKARTLALPNIGFLSSSSKSLRSLTA. Thr-53 carries the post-translational modification N-acetylthreonine. Positions 102–300 constitute a KARI N-terminal Rossmann domain; the sequence is VRGGRDLFKH…ALGSPFTFAT (199 aa). NADP(+) is bound by residues 123–130, 156–161, and 195–199; these read GVIGWGSQ, RKGSRS, and SDAAQ. His-220 is a catalytic residue. KARI C-terminal knotted domains follow at residues 301-449 and 450-586; these read TLEQ…RPAG and DLGP…RPEL. The Mg(2+) site is built by Asp-309, Glu-313, Glu-486, and Glu-490. Ser-512 serves as a coordination point for substrate.

This sequence belongs to the ketol-acid reductoisomerase family. In terms of assembly, homodimer. The cofactor is Mg(2+).

The protein resides in the plastid. It localises to the chloroplast. It carries out the reaction (2R)-2,3-dihydroxy-3-methylbutanoate + NADP(+) = (2S)-2-acetolactate + NADPH + H(+). The enzyme catalyses (2R,3R)-2,3-dihydroxy-3-methylpentanoate + NADP(+) = (S)-2-ethyl-2-hydroxy-3-oxobutanoate + NADPH + H(+). Its pathway is amino-acid biosynthesis; L-isoleucine biosynthesis; L-isoleucine from 2-oxobutanoate: step 2/4. It participates in amino-acid biosynthesis; L-valine biosynthesis; L-valine from pyruvate: step 2/4. The polypeptide is Ketol-acid reductoisomerase, chloroplastic (Arabidopsis thaliana (Mouse-ear cress)).